Here is a 357-residue protein sequence, read N- to C-terminus: uncharacterized protein (357 aa).

A run of 3 helical transmembrane segments spans residues 21–41 (FIKIIEFWFYLIQILTVLFSW), 86–106 (FFCLFTDTLYFMMLIITCTLF), and 135–155 (GGFVEFGSFTVLLLLKWPVIF). Disordered stretches follow at residues 184 to 229 (DKNK…AMSD) and 283 to 357 (KAGS…NKRN). Positions 195 to 223 (TTNTTNFSGNGSSSSTTNATSSSSSQANN) are enriched in low complexity. Basic and acidic residues-rich tracts occupy residues 305-314 (KIEEYDNQKQ) and 322-337 (KETNKQQTQKDDEKET). A coiled-coil region spans residues 305-337 (KIEEYDNQKQEEEENEEKETNKQQTQKDDEKET). Positions 346-357 (KKSKKGKKNKRN) are enriched in basic residues.

Its subcellular location is the membrane. This is an uncharacterized protein from Dictyostelium discoideum (Social amoeba).